The sequence spans 271 residues: Shikimate kinase (271 aa).

83-93 is an ATP binding site; it reads PIAMGLKSSSA.

This sequence belongs to the GHMP kinase family. Archaeal shikimate kinase subfamily.

It is found in the cytoplasm. The enzyme catalyses shikimate + ATP = 3-phosphoshikimate + ADP + H(+). It functions in the pathway metabolic intermediate biosynthesis; chorismate biosynthesis; chorismate from D-erythrose 4-phosphate and phosphoenolpyruvate: step 5/7. The chain is Shikimate kinase from Thermococcus kodakarensis (strain ATCC BAA-918 / JCM 12380 / KOD1) (Pyrococcus kodakaraensis (strain KOD1)).